A 180-amino-acid chain; its full sequence is ATP synthase subunit b, plastid (180 aa).

A helical membrane pass occupies residues 27–49 (LVTTLINIAVVLSLLIVFGKGFL).

Belongs to the ATPase B chain family. In terms of assembly, F-type ATPases have 2 components, F(1) - the catalytic core - and F(0) - the membrane proton channel. F(1) has five subunits: alpha(3), beta(3), gamma(1), delta(1), epsilon(1). F(0) has four main subunits: a(1), b(1), b'(1) and c(10-14). The alpha and beta chains form an alternating ring which encloses part of the gamma chain. F(1) is attached to F(0) by a central stalk formed by the gamma and epsilon chains, while a peripheral stalk is formed by the delta, b and b' chains.

The protein resides in the plastid membrane. F(1)F(0) ATP synthase produces ATP from ADP in the presence of a proton or sodium gradient. F-type ATPases consist of two structural domains, F(1) containing the extramembraneous catalytic core and F(0) containing the membrane proton channel, linked together by a central stalk and a peripheral stalk. During catalysis, ATP synthesis in the catalytic domain of F(1) is coupled via a rotary mechanism of the central stalk subunits to proton translocation. Functionally, component of the F(0) channel, it forms part of the peripheral stalk, linking F(1) to F(0). The protein is ATP synthase subunit b, plastid of Cuscuta gronovii (Common dodder).